The sequence spans 70 residues: U2-agatoxin-Ao1b (70 aa).

An N-terminal signal peptide occupies residues 1 to 20 (MRAIISLILISAMVFSMIAA). Residues 21–34 (VPEEEGLQLSEDER) constitute a propeptide that is removed on maturation. Disulfide bonds link Cys-37-Cys-53, Cys-44-Cys-58, and Cys-52-Cys-68. Leu-69 carries the leucine amide modification.

It belongs to the neurotoxin 01 (U2-agtx) family. In terms of tissue distribution, expressed by the venom gland.

It localises to the secreted. In terms of biological role, insect active toxin causing rapid but reversible paralysis in crickets. No activity shown in mammals. Does not show effect on mammalian voltage-gated calcium channels. In Agelena orientalis (Funnel-web spider), this protein is U2-agatoxin-Ao1b.